We begin with the raw amino-acid sequence, 333 residues long: MKRLLNSATQLLLVLVLGISLSGCVTTHVPTATTSPWQAMDLDTQANPLDVAFTDSSHGYLVGSNRMIRETNDGGAHWNERSLDLPDEENFRLISIDFSGDEGWIAGQPGLLMHSDDGGQNWTRLFLDTKLPGEPYLITALGSHSAELATNVGAVYETHNDGSSWEAKVTDAAGAVRDLRRSKDGSYVSVSGLGNFYATWEPGDSVWQVHQRVSSQRLQSIGFQPDGNLWMVARGAQIRLNDEPGDFDSWSKAIIPITNGYGYMDLAWDDDGAIWAGGGNGTLLVSRDGGDSWENDPVGDRQPSNFTRMVFDGEHAFVLGERGNLLRWVDNAV.

An N-terminal signal peptide occupies residues 1–23 (MKRLLNSATQLLLVLVLGISLSG). A lipid anchor (N-palmitoyl cysteine) is attached at cysteine 24. Cysteine 24 carries the S-diacylglycerol cysteine lipid modification.

Belongs to the Ycf48 family. Part of early PSII assembly complexes which includes D1 (psbA) and PsbI; not found in mature PSII. Binds to the lumenal side of PSII complexes. Interacts with YidC.

Its subcellular location is the cellular thylakoid membrane. In terms of biological role, a factor required for optimal assembly of photosystem II (PSII), acting in the early stages of PSII assembly. Also plays a role in replacement of photodamaged D1 (psbA). Assists YidC in synthesis of chlorophyll-binding proteins. This chain is Photosystem II assembly lipoprotein Ycf48, found in Synechococcus sp. (strain CC9605).